A 307-amino-acid polypeptide reads, in one-letter code: MRKTGNRRERGAKTTIVRRQIKKNHAGHHGGAWKVAFADFTLAMMALFMTLWIVNSVSKSERESIIAALHGQSIFNGGGLSPLNKISPSHPPKPATVAAPEETEKKARDVNEKTALLKKKSATELGELATSINTIARDAHMEANLEMEIVPQGLRVLIKDDQNRNMFERGSAQIMPFFKTLLVELAPVFDSLDNKIIITGHTDAMAYKNNIYNNWNLSGDRALSARRVLEEAGMPEDKVMQVSAMADQMLLDAKNPQSAGNRRIEIMVLTKSASDTLYQYFGQHGDKVVQPLVQKLDKQQVHSQRTR.

A helical membrane pass occupies residues 32 to 54 (AWKVAFADFTLAMMALFMTLWIV). Positions 87-108 (SPSHPPKPATVAAPEETEKKAR) are disordered. Residues 154 to 272 (LRVLIKDDQN…RIEIMVLTKS (119 aa)) enclose the OmpA-like domain.

Belongs to the MotB family.

It is found in the cell inner membrane. Part of the flagellar gene cluster Flag-2. However, the Flag-2 flagellar system could be inactive in strain 042 due to a frameshift in lfgC. The polypeptide is Putative flagellar export/assembly protein LafU (Escherichia coli O44:H18 (strain 042 / EAEC)).